The chain runs to 293 residues: 4-diphosphocytidyl-2-C-methyl-D-erythritol kinase (293 aa).

Lysine 16 is an active-site residue. 99 to 109 serves as a coordination point for ATP; the sequence is PMGAGLGGGSS. The active site involves aspartate 141.

This sequence belongs to the GHMP kinase family. IspE subfamily.

It carries out the reaction 4-CDP-2-C-methyl-D-erythritol + ATP = 4-CDP-2-C-methyl-D-erythritol 2-phosphate + ADP + H(+). Its pathway is isoprenoid biosynthesis; isopentenyl diphosphate biosynthesis via DXP pathway; isopentenyl diphosphate from 1-deoxy-D-xylulose 5-phosphate: step 3/6. Catalyzes the phosphorylation of the position 2 hydroxy group of 4-diphosphocytidyl-2C-methyl-D-erythritol. The chain is 4-diphosphocytidyl-2-C-methyl-D-erythritol kinase from Burkholderia thailandensis (strain ATCC 700388 / DSM 13276 / CCUG 48851 / CIP 106301 / E264).